A 648-amino-acid polypeptide reads, in one-letter code: Proton myo-inositol cotransporter (648 aa).

The Cytoplasmic portion of the chain corresponds to 1-76 (MSRKASENVE…AARRQFQQDE (76 aa)). 3 positions are modified to phosphoserine: serine 6, serine 47, and serine 50. A helical transmembrane segment spans residues 77 to 97 (TPAFVYVVAVFSALGGFLFGY). Over 98–125 (DTGVVSGAMLLLKRQLSLDALWQELLVS) the chain is Extracellular. A helical membrane pass occupies residues 126–146 (STVGAAAVSALAGGALNGVFG). The Cytoplasmic segment spans residues 147–148 (RR). A helical membrane pass occupies residues 149–169 (AAILLASALFTAGSAVLAAAN). Residues 170 to 178 (NKETLLAGR) lie on the Extracellular side of the membrane. The chain crosses the membrane as a helical span at residues 179-199 (LVVGLGIGIASMTVPVYIAEV). Residues 200 to 212 (SPPNLRGRLVTIN) lie on the Cytoplasmic side of the membrane. The helical transmembrane segment at 213 to 233 (TLFITGGQFFASVVDGAFSYL) threads the bilayer. The Extracellular segment spans residues 234–239 (QKDGWR). A helical membrane pass occupies residues 240-260 (YMLGLAAVPAVIQFFGFLFLP). The Cytoplasmic portion of the chain corresponds to 261 to 324 (ESPRWLIQKG…RMLSYPPTRR (64 aa)). A helical transmembrane segment spans residues 325–345 (ALIVGCGLQMFQQLSGINTIM). Residues 346-363 (YYSATILQMSGVEDDRLA) lie on the Extracellular side of the membrane. Residues 364-384 (IWLASVTAFTNFIFTLVGVWL) form a helical membrane-spanning segment. Residues 385–393 (VEKVGRRKL) are Cytoplasmic-facing. The chain crosses the membrane as a helical span at residues 394–414 (TFGSLAGTTVALIILALGFVL). Topologically, residues 415–508 (SAQVSPRITF…NFCPTPYSWT (94 aa)) are extracellular. Asparagine 433, asparagine 458, and asparagine 485 each carry an N-linked (GlcNAc...) asparagine glycan. A helical transmembrane segment spans residues 509 to 529 (ALLGLILYLVFFAPGMGPMPW). Residues 530–549 (TVNSEIYPLWARSTGNACSS) lie on the Cytoplasmic side of the membrane. Residues 550–570 (GINWIFNVLVSLTFLHTAEYL) traverse the membrane as a helical segment. At 571-573 (TYY) the chain is on the extracellular side. The helical transmembrane segment at 574 to 594 (GAFFLYAGFAAVGLLFIYGCL) threads the bilayer. Over 595–648 (PETKGKKLEEIESLFDNRLCTCGTSDSDEGRYIEYIRVKGSNYHLSDNDASDVE) the chain is Cytoplasmic. 2 positions are modified to phosphoserine: serine 640 and serine 645.

It belongs to the major facilitator superfamily. Sugar transporter (TC 2.A.1.1) family. In terms of processing, glycosylated. Predominantly expressed in the brain.

It localises to the cell membrane. It carries out the reaction myo-inositol(out) + H(+)(out) = myo-inositol(in) + H(+)(in). Its function is as follows. H(+)-myo-inositol cotransporter. Can also transport related stereoisomers. The sequence is that of Proton myo-inositol cotransporter from Homo sapiens (Human).